We begin with the raw amino-acid sequence, 2408 residues long: Protein ELYS (2408 aa).

Positions 1-492 (MQNLEAQVTG…SGLIHFACTG (492 aa)) are seven-bladed beta propeller repeats. Residues 1016–2408 (YSLPSLVWRE…AKPVTRRKMR (1393 aa)) form a disordered region. Over residues 1124–1145 (PLTSSDTDNNQTPHKSPLLKTS) the composition is skewed to polar residues. The span at 1457–1466 (NDQDSEEIEE) shows a compositional bias: acidic residues. 2 stretches are compositionally biased toward polar residues: residues 1705 to 1719 (INEG…QSTL) and 1735 to 1750 (PADS…TLPT). Basic and acidic residues predominate over residues 2136–2149 (QASKIQEDLSDTPR). Sufficient for chromatin-binding regions lie at residues 2281–2359 (STQY…PVEI) and 2359–2408 (IKLI…RKMR). Residues 2281 to 2408 (STQYVFSPPS…AKPVTRRKMR (128 aa)) form a sufficient to block nuclear pore assembly region. Residues 2329-2341 (SKPRGRPPKHKAK) constitute a DNA-binding region (a.T hook). The span at 2331–2348 (PRGRPPKHKAKAVTRVLK) shows a compositional bias: basic residues. Residues 2378 to 2389 (DSTEAKGAEKIS) are compositionally biased toward basic and acidic residues.

Belongs to the ELYS family. Interacts with the Nup107-160 subcomplex of the NPC.

It localises to the nucleus. The protein localises to the nuclear pore complex. Its subcellular location is the cytoplasm. It is found in the nucleoplasm. In terms of biological role, required for the assembly of a functional nuclear pore complex (NPC) on the surface of chromosomes as nuclei form at the end of mitosis. May initiate NPC assembly by binding to chromatin and recruiting the Nup107-160 subcomplex, which may in turn recruit membrane vesicles containing pom121 and tmem48/ndc1. Association with chromatin may require the presence of the mcm2-mcm7 complex, suggesting a mechanism for coordination of nuclear assembly and the inactivation of replication licensing. The sequence is that of Protein ELYS (ahctf1) from Xenopus laevis (African clawed frog).